Consider the following 367-residue polypeptide: tRNA(Ile)-lysidine synthase (367 aa).

32-37 is an ATP binding site; it reads SGGSDS.

The protein belongs to the tRNA(Ile)-lysidine synthase family.

It is found in the cytoplasm. It catalyses the reaction cytidine(34) in tRNA(Ile2) + L-lysine + ATP = lysidine(34) in tRNA(Ile2) + AMP + diphosphate + H(+). Its function is as follows. Ligates lysine onto the cytidine present at position 34 of the AUA codon-specific tRNA(Ile) that contains the anticodon CAU, in an ATP-dependent manner. Cytidine is converted to lysidine, thus changing the amino acid specificity of the tRNA from methionine to isoleucine. In Hyphomonas neptunium (strain ATCC 15444), this protein is tRNA(Ile)-lysidine synthase.